We begin with the raw amino-acid sequence, 442 residues long: tRNA-2-methylthio-N(6)-dimethylallyladenosine synthase (442 aa).

The MTTase N-terminal domain maps to 2–120; the sequence is KKVFIRTFGC…LPKMIVDKET (119 aa). Cysteine 11, cysteine 49, cysteine 83, cysteine 157, cysteine 161, and cysteine 164 together coordinate [4Fe-4S] cluster. A Radical SAM core domain is found at 143–375; sequence RVEGGAAFVS…NEVIEAETAR (233 aa). The region spanning 378 to 441 is the TRAM domain; the sequence is QTMIGTVQRC…TFSLRGKIVE (64 aa).

It belongs to the methylthiotransferase family. MiaB subfamily. Monomer. The cofactor is [4Fe-4S] cluster.

The protein localises to the cytoplasm. It carries out the reaction N(6)-dimethylallyladenosine(37) in tRNA + (sulfur carrier)-SH + AH2 + 2 S-adenosyl-L-methionine = 2-methylsulfanyl-N(6)-dimethylallyladenosine(37) in tRNA + (sulfur carrier)-H + 5'-deoxyadenosine + L-methionine + A + S-adenosyl-L-homocysteine + 2 H(+). Functionally, catalyzes the methylthiolation of N6-(dimethylallyl)adenosine (i(6)A), leading to the formation of 2-methylthio-N6-(dimethylallyl)adenosine (ms(2)i(6)A) at position 37 in tRNAs that read codons beginning with uridine. The polypeptide is tRNA-2-methylthio-N(6)-dimethylallyladenosine synthase (Neisseria meningitidis serogroup A / serotype 4A (strain DSM 15465 / Z2491)).